Consider the following 180-residue polypeptide: Endogenous alpha-amylase/subtilisin inhibitor (180 aa).

2 cysteine pairs are disulfide-bonded: C42/C89 and C143/C147.

It belongs to the protease inhibitor I3 (leguminous Kunitz-type inhibitor) family.

Functionally, inhibitor of endogenous alpha-amylase (wheat also produces an exogenous inhibitor which inactivates alpha-amylase from animal and insect origin). This inhibitor can also inhibit subtilisin. This chain is Endogenous alpha-amylase/subtilisin inhibitor, found in Triticum aestivum (Wheat).